The primary structure comprises 208 residues: Large ribosomal subunit protein uL3 (208 aa).

Q149 carries the post-translational modification N5-methylglutamine.

Belongs to the universal ribosomal protein uL3 family. As to quaternary structure, part of the 50S ribosomal subunit. Forms a cluster with proteins L14 and L19. Post-translationally, methylated by PrmB.

One of the primary rRNA binding proteins, it binds directly near the 3'-end of the 23S rRNA, where it nucleates assembly of the 50S subunit. This Mannheimia succiniciproducens (strain KCTC 0769BP / MBEL55E) protein is Large ribosomal subunit protein uL3.